The following is a 639-amino-acid chain: mRNA export factor (639 aa).

Disordered stretches follow at residues 1–45, 63–287, and 322–355; these read MQAE…SLES, LLGD…KWGA, and CTAR…SQPR. Over residues 142 to 152 the composition is skewed to basic residues; sequence PRRRTHARSRS. Low complexity predominate over residues 153-169; that stretch reads PRAGSTSSQQPPSSSGG. Over residues 175 to 189 the composition is skewed to basic and acidic residues; the sequence is VRREAGDRETSEKPA. Residues 203-215 are compositionally biased toward polar residues; sequence HQCQSPPAQTASQ. 2 stretches are compositionally biased toward basic and acidic residues: residues 234–247 and 326–348; these read RTPH…HEGA and DPAR…ERRT. Zn(2+) contacts are provided by cysteine 525, histidine 606, cysteine 610, and cysteine 615. Residues 525–615 form a CHC2-type zinc finger; that stretch reads CHLAASKSPL…HANVCRKEEC (91 aa).

This sequence belongs to the HHV-1 ICP27 protein family.

The protein localises to the host cytoplasm. It is found in the host nucleus. Its function is as follows. Multifunctional regulator of the expression of viral genes that mediates nuclear export of viral intronless mRNAs. This immediate early (EI) protein promotes the nuclear export of viral intronless mRNAs. The polypeptide is mRNA export factor (Amazona oratrix (yellow-headed parrot)).